The sequence spans 460 residues: Nuclear distribution protein PAC1 (460 aa).

The LisH domain occupies 9–41 (QAEELHKSIIAYLAANNLQDSANAMRTELGLGE). Residues 61-88 (TSVVRLQKKIMDLEAQTQTLQTELNSAT) are a coiled coil. Positions 82–92 (TELNSATPTSN) are enriched in polar residues. Residues 82 to 105 (TELNSATPTSNRRGDPSSWLPAGP) form a disordered region. WD repeat units follow at residues 112–153 (SHRT…RTVK), 155–195 (HTKA…QNIR), 199–246 (GHDH…CVKT), 249–288 (GHAD…PEAK), 293–354 (GHEH…KTLI), 355–394 (GHDN…KCVK), and 399–456 (SHEH…MSLR). A disordered region spans residues 414–433 (IKDKGPGEETNGDVGTPKKA).

Belongs to the WD repeat LIS1/nudF family. Self-associates. Interacts with NDL1 and dynein.

Its subcellular location is the cytoplasm. It is found in the cytoskeleton. The protein resides in the spindle pole. Functionally, positively regulates the activity of the minus-end directed microtubule motor protein dynein. May enhance dynein-mediated microtubule sliding by targeting dynein to the microtubule plus end. Required for nuclear migration during vegetative growth as well as development. Required for retrograde early endosome (EE) transport from the hyphal tip. Required for localization of dynein to the mitotic spindle poles. Recruits additional proteins to the dynein complex at SPBs. This is Nuclear distribution protein PAC1 from Gibberella zeae (strain ATCC MYA-4620 / CBS 123657 / FGSC 9075 / NRRL 31084 / PH-1) (Wheat head blight fungus).